The primary structure comprises 122 residues: Small ribosomal subunit protein uS13 (122 aa).

Residues 99–122 (RGQRTHTNARTRKGPAKAIAGKKK) form a disordered region.

The protein belongs to the universal ribosomal protein uS13 family. As to quaternary structure, part of the 30S ribosomal subunit. Forms a loose heterodimer with protein S19. Forms two bridges to the 50S subunit in the 70S ribosome.

In terms of biological role, located at the top of the head of the 30S subunit, it contacts several helices of the 16S rRNA. In the 70S ribosome it contacts the 23S rRNA (bridge B1a) and protein L5 of the 50S subunit (bridge B1b), connecting the 2 subunits; these bridges are implicated in subunit movement. Contacts the tRNAs in the A and P-sites. This Bradyrhizobium diazoefficiens (strain JCM 10833 / BCRC 13528 / IAM 13628 / NBRC 14792 / USDA 110) protein is Small ribosomal subunit protein uS13.